A 419-amino-acid chain; its full sequence is Mitogen-activated protein kinase spm1 (419 aa).

Positions 23 to 314 constitute a Protein kinase domain; it reads YTVTKELGQG…VEEALEHPYL (292 aa). ATP contacts are provided by residues 29 to 37 and K52; that span reads LGQGAYGIV. The active-site Proton acceptor is D149.

The protein belongs to the protein kinase superfamily. Ser/Thr protein kinase family. MAP kinase subfamily. The cofactor is Mg(2+). Post-translationally, phosphorylated by the MAP kinase kinase mkk1.

It carries out the reaction L-seryl-[protein] + ATP = O-phospho-L-seryl-[protein] + ADP + H(+). The catalysed reaction is L-threonyl-[protein] + ATP = O-phospho-L-threonyl-[protein] + ADP + H(+). Its function is as follows. Mitogen-activated protein kinase, part of the mkh1-mkk1-spm1 MAPK cascade that regulates vegetative growth, conidial formation, colony surface hydrophobicity, osmotic stress, cell wall integrity maintenance, carbon and nitrogen source utilization, chitin distribution, septa formation, and pathogenicity. This chain is Mitogen-activated protein kinase spm1, found in Cytospora mali (Apple Valsa canker fungus).